Here is a 477-residue protein sequence, read N- to C-terminus: Bifunctional protein HldE (477 aa).

The ribokinase stretch occupies residues 1 to 318; the sequence is MKVNLPAFER…ENAVRGRADT (318 aa). 195-198 is an ATP binding site; it reads NLSE. Residue D264 is part of the active site. The interval 344 to 477 is cytidylyltransferase; that stretch reads MTNGVFDILH…IKKIQTESEK (134 aa).

This sequence in the N-terminal section; belongs to the carbohydrate kinase PfkB family. The protein in the C-terminal section; belongs to the cytidylyltransferase family. Homodimer.

It catalyses the reaction D-glycero-beta-D-manno-heptose 7-phosphate + ATP = D-glycero-beta-D-manno-heptose 1,7-bisphosphate + ADP + H(+). It carries out the reaction D-glycero-beta-D-manno-heptose 1-phosphate + ATP + H(+) = ADP-D-glycero-beta-D-manno-heptose + diphosphate. It functions in the pathway nucleotide-sugar biosynthesis; ADP-L-glycero-beta-D-manno-heptose biosynthesis; ADP-L-glycero-beta-D-manno-heptose from D-glycero-beta-D-manno-heptose 7-phosphate: step 1/4. Its pathway is nucleotide-sugar biosynthesis; ADP-L-glycero-beta-D-manno-heptose biosynthesis; ADP-L-glycero-beta-D-manno-heptose from D-glycero-beta-D-manno-heptose 7-phosphate: step 3/4. In terms of biological role, catalyzes the phosphorylation of D-glycero-D-manno-heptose 7-phosphate at the C-1 position to selectively form D-glycero-beta-D-manno-heptose-1,7-bisphosphate. Catalyzes the ADP transfer from ATP to D-glycero-beta-D-manno-heptose 1-phosphate, yielding ADP-D-glycero-beta-D-manno-heptose. This is Bifunctional protein HldE from Salmonella agona (strain SL483).